A 99-amino-acid chain; its full sequence is NADH dehydrogenase [ubiquinone] 1 alpha subcomplex subunit 2 (99 aa).

Ala2 carries the post-translational modification N-acetylalanine. Residues Cys24 and Cys58 are joined by a disulfide bond. Position 64 is an N6-acetyllysine; alternate (Lys64). Position 64 is an N6-succinyllysine; alternate (Lys64).

This sequence belongs to the complex I NDUFA2 subunit family. In terms of assembly, complex I is composed of 45 different subunits.

The protein localises to the mitochondrion inner membrane. Its function is as follows. Accessory subunit of the mitochondrial membrane respiratory chain NADH dehydrogenase (Complex I), that is believed not to be involved in catalysis. Complex I functions in the transfer of electrons from NADH to the respiratory chain. The immediate electron acceptor for the enzyme is believed to be ubiquinone. The chain is NADH dehydrogenase [ubiquinone] 1 alpha subcomplex subunit 2 (NDUFA2) from Homo sapiens (Human).